The sequence spans 180 residues: Small ribosomal subunit protein eS10y (180 aa).

The interval 92–180 is disordered; sequence LKKQQKPLGR…GGGAAGSDLP (89 aa). Positions 108–128 are enriched in basic and acidic residues; sequence DRPRGPPRGDGERRFGDRDGY. Gly residues predominate over residues 152–180; it reads FRGGAGGARQGFGRGAGGFGGGAAGSDLP.

It belongs to the eukaryotic ribosomal protein eS10 family.

The protein localises to the cytoplasm. The polypeptide is Small ribosomal subunit protein eS10y (RPS10B) (Arabidopsis thaliana (Mouse-ear cress)).